The chain runs to 198 residues: Large ribosomal subunit protein bL25 (198 aa).

Belongs to the bacterial ribosomal protein bL25 family. CTC subfamily. As to quaternary structure, part of the 50S ribosomal subunit; part of the 5S rRNA/L5/L18/L25 subcomplex. Contacts the 5S rRNA. Binds to the 5S rRNA independently of L5 and L18.

Functionally, this is one of the proteins that binds to the 5S RNA in the ribosome where it forms part of the central protuberance. The protein is Large ribosomal subunit protein bL25 of Phocaeicola vulgatus (strain ATCC 8482 / DSM 1447 / JCM 5826 / CCUG 4940 / NBRC 14291 / NCTC 11154) (Bacteroides vulgatus).